The chain runs to 118 residues: Large ribosomal subunit protein bL19 (118 aa).

This sequence belongs to the bacterial ribosomal protein bL19 family.

Functionally, this protein is located at the 30S-50S ribosomal subunit interface and may play a role in the structure and function of the aminoacyl-tRNA binding site. The protein is Large ribosomal subunit protein bL19 of Alcanivorax borkumensis (strain ATCC 700651 / DSM 11573 / NCIMB 13689 / SK2).